Here is a 538-residue protein sequence, read N- to C-terminus: Lipid scramblase CLPTM1L (538 aa).

Topologically, residues 1–10 are cytoplasmic; it reads MWSGRSSFTS. Residues 11–31 traverse the membrane as a helical segment; that stretch reads LVVGVFVVYVVHTCWVMYGIV. Topologically, residues 32 to 284 are extracellular; sequence YTRPCSGHGR…VKGIFVDTNL (253 aa). N-linked (GlcNAc...) asparagine glycans are attached at residues Asn-91 and Asn-101. Residues 285–305 form a helical membrane-spanning segment; sequence YFLALTFFVAAFHLLFDFLAF. Over 306-324 the chain is Cytoplasmic; sequence KNDISFWKKKKSMIGMSTK. The helical transmembrane segment at 325–341 threads the bilayer; the sequence is AVLWRCFSTVVIFLFLL. The Extracellular segment spans residues 342–402; it reads DEQTSLPVLV…TEEYDAQAMK (61 aa). Residues 403–423 traverse the membrane as a helical segment; sequence YLSYLLYPLCIGGAIYSLLNI. Over 424 to 428 the chain is Cytoplasmic; sequence KYKSW. A helical membrane pass occupies residues 429-449; sequence YSWLINSFVNGVYAFGFLFML. At 450–538 the chain is on the extracellular side; it reads PQLFVNYKMK…DTPQRKPHTD (89 aa).

This sequence belongs to the CLPTM1 family.

Its subcellular location is the endoplasmic reticulum membrane. The enzyme catalyses a 6-(alpha-D-glucosaminyl)-1-(1,2-diacyl-sn-glycero-3-phospho)-1D-myo-inositol(in) = a 6-(alpha-D-glucosaminyl)-1-(1,2-diacyl-sn-glycero-3-phospho)-1D-myo-inositol(out). The catalysed reaction is 6-(alpha-D-glucosaminyl)-(1-octadecanoyl,2-(9Z)-octadecenoyl-sn-glycero-3-phospho)-1D-myo-inositol(in) = 6-(alpha-D-glucosaminyl)-(1-octadecanoyl,2-(9Z)-octadecenoyl-sn-glycero-3-phospho)-1D-myo-inositol(out). It catalyses the reaction a 1,2-diacyl-sn-glycero-3-phospho-(1D-myo-inositol)(in) = a 1,2-diacyl-sn-glycero-3-phospho-(1D-myo-inositol)(out). It carries out the reaction a 1,2-diacyl-sn-glycero-3-phosphocholine(in) = a 1,2-diacyl-sn-glycero-3-phosphocholine(out). The enzyme catalyses a 1,2-diacyl-sn-glycero-3-phosphoethanolamine(in) = a 1,2-diacyl-sn-glycero-3-phosphoethanolamine(out). Its function is as follows. Scramblase that mediates the translocation of glucosaminylphosphatidylinositol (alpha-D-GlcN-(1-6)-(1,2-diacyl-sn-glycero-3-phospho)-1D-myo-inositol, GlcN-PI) across the endoplasmic reticulum (ER) membrane, from the cytosolic leaflet to the luminal leaflet of the ER membrane, where it participates in the biosynthesis of glycosylphosphatidylinositol (GPI). GPI is a lipid glycoconjugate involved in post-translational modification of proteins. Can also translocate 1,2-diacyl-sn-glycero-3-phospho-(1D-myo-inositol) (phosphatidylinositol or PI), as well as several other phospholipids (1,2-diacyl-sn-glycero-3-phosphocholine, 1,2-diacyl-sn-glycero-3-phosphoethanolamine), and N-acetylglucosaminylphosphatidylinositol (GlcNAc-PI) in vitro. This Bos taurus (Bovine) protein is Lipid scramblase CLPTM1L (CLPTM1L).